The primary structure comprises 285 residues: Aspartate/glutamate leucyltransferase (285 aa).

The protein belongs to the R-transferase family. Bpt subfamily.

Its subcellular location is the cytoplasm. The enzyme catalyses N-terminal L-glutamyl-[protein] + L-leucyl-tRNA(Leu) = N-terminal L-leucyl-L-glutamyl-[protein] + tRNA(Leu) + H(+). It carries out the reaction N-terminal L-aspartyl-[protein] + L-leucyl-tRNA(Leu) = N-terminal L-leucyl-L-aspartyl-[protein] + tRNA(Leu) + H(+). Its function is as follows. Functions in the N-end rule pathway of protein degradation where it conjugates Leu from its aminoacyl-tRNA to the N-termini of proteins containing an N-terminal aspartate or glutamate. In Dinoroseobacter shibae (strain DSM 16493 / NCIMB 14021 / DFL 12), this protein is Aspartate/glutamate leucyltransferase.